Consider the following 409-residue polypeptide: Elongation factor Tu, chloroplastic (409 aa).

Residues K10–E214 enclose the tr-type G domain. The segment at G19–T26 is G1. G19–T26 contacts GTP. Residue T26 participates in Mg(2+) binding. Residues G60–N64 form a G2 region. Positions D81–G84 are G3. Residues D81–H85 and N136–D139 each bind GTP. A G4 region spans residues N136 to D139. The tract at residues S174 to L176 is G5.

It belongs to the TRAFAC class translation factor GTPase superfamily. Classic translation factor GTPase family. EF-Tu/EF-1A subfamily.

It localises to the plastid. It is found in the chloroplast. The enzyme catalyses GTP + H2O = GDP + phosphate + H(+). GTP hydrolase that promotes the GTP-dependent binding of aminoacyl-tRNA to the A-site of ribosomes during protein biosynthesis. The sequence is that of Elongation factor Tu, chloroplastic (tufA) from Rhodomonas salina (Cryptomonas salina).